The following is a 428-amino-acid chain: Adenylosuccinate synthetase (428 aa).

GTP-binding positions include 12–18 (GDEGKGK) and 40–42 (GHT). Aspartate 13 acts as the Proton acceptor in catalysis. Aspartate 13 and glycine 40 together coordinate Mg(2+). Residues 13-16 (DEGK), 38-41 (NAGH), threonine 127, arginine 141, glutamine 222, threonine 237, and arginine 301 each bind IMP. Histidine 41 serves as the catalytic Proton donor. 297-303 (TVTKRPR) contributes to the substrate binding site. Residues arginine 303, 329–331 (CLD), and 411–413 (SVG) contribute to the GTP site.

Belongs to the adenylosuccinate synthetase family. In terms of assembly, homodimer. Mg(2+) serves as cofactor.

The protein localises to the cytoplasm. The catalysed reaction is IMP + L-aspartate + GTP = N(6)-(1,2-dicarboxyethyl)-AMP + GDP + phosphate + 2 H(+). It functions in the pathway purine metabolism; AMP biosynthesis via de novo pathway; AMP from IMP: step 1/2. Its function is as follows. Plays an important role in the de novo pathway of purine nucleotide biosynthesis. Catalyzes the first committed step in the biosynthesis of AMP from IMP. The polypeptide is Adenylosuccinate synthetase (Levilactobacillus brevis (strain ATCC 367 / BCRC 12310 / CIP 105137 / JCM 1170 / LMG 11437 / NCIMB 947 / NCTC 947) (Lactobacillus brevis)).